The primary structure comprises 494 residues: Sulfate adenylyltransferase subunit 1 (494 aa).

Residues 28-242 (TRPLRLITCG…TLELATVRST (215 aa)) form the tr-type G domain. The G1 stretch occupies residues 37 to 44 (GSVDDGKS). GTP is bound at residue 37–44 (GSVDDGKS). Residues 94–98 (GITID) are G2. Residues 115–118 (DTPG) form a G3 region. Residues 115 to 119 (DTPGH) and 170 to 173 (NKID) each bind GTP. The G4 stretch occupies residues 170–173 (NKID). A G5 region spans residues 207 to 209 (SAL).

This sequence belongs to the TRAFAC class translation factor GTPase superfamily. Classic translation factor GTPase family. CysN/NodQ subfamily. Heterodimer composed of CysD, the smaller subunit, and CysN.

It carries out the reaction sulfate + ATP + H(+) = adenosine 5'-phosphosulfate + diphosphate. It participates in sulfur metabolism; hydrogen sulfide biosynthesis; sulfite from sulfate: step 1/3. With CysD forms the ATP sulfurylase (ATPS) that catalyzes the adenylation of sulfate producing adenosine 5'-phosphosulfate (APS) and diphosphate, the first enzymatic step in sulfur assimilation pathway. APS synthesis involves the formation of a high-energy phosphoric-sulfuric acid anhydride bond driven by GTP hydrolysis by CysN coupled to ATP hydrolysis by CysD. The chain is Sulfate adenylyltransferase subunit 1 from Agrobacterium fabrum (strain C58 / ATCC 33970) (Agrobacterium tumefaciens (strain C58)).